We begin with the raw amino-acid sequence, 309 residues long: Mitochondrial substrate carrier family protein ancA (309 aa).

Solcar repeat units lie at residues Ser10–Phe102, Lys114–Ile203, and Ala216–Leu299. Helical transmembrane passes span Phe12–Gln41, Leu79–Phe103, Thr113–Phe133, Val181–Lys201, and Trp215–Phe235. Residues Arg84 and Lys96 each coordinate ADP. Arg239 contributes to the ADP binding site. An important for transport activity region spans residues Arg239–Met244. Residues Arg239 to Met244 carry the Nucleotide carrier signature motif motif. Residues Ala276 to Tyr293 form a helical membrane-spanning segment.

The protein belongs to the mitochondrial carrier (TC 2.A.29) family. Monomer.

It localises to the mitochondrion inner membrane. The catalysed reaction is ADP(in) + ATP(out) = ADP(out) + ATP(in). With respect to regulation, the matrix-open state (m-state) is inhibited by the membrane-permeable bongkrekic acid (BKA). The cytoplasmic-open state (c-state) is inhibited by the membrane-impermeable toxic inhibitor carboxyatractyloside (CATR). Its function is as follows. ADP:ATP antiporter that mediates import of ADP into the mitochondrial matrix for ATP synthesis, and export of ATP out to fuel the cell. Cycles between the cytoplasmic-open state (c-state) and the matrix-open state (m-state): operates by the alternating access mechanism with a single substrate-binding site intermittently exposed to either the cytosolic (c-state) or matrix (m-state) side of the inner mitochondrial membrane. The chain is Mitochondrial substrate carrier family protein ancA (ancA) from Dictyostelium discoideum (Social amoeba).